The following is a 363-amino-acid chain: Autophagy-related protein 3 (363 aa).

Composition is skewed to basic and acidic residues over residues 84–106 (DFAGDAGHDETVVRDGEDFRGDG) and 129–138 (ARVRDVRTVD). Residues 84–171 (DFAGDAGHDE…DDEAIIRDPK (88 aa)) are flexible region. The disordered stretch occupies residues 84-174 (DFAGDAGHDE…AIIRDPKADN (91 aa)). Residues 139-164 (ESGEMGEREDDEDDIPDMEDDDDDDE) show a composition bias toward acidic residues. Residue Cys247 is the Glycyl thioester intermediate of the active site. The tract at residues 251–339 (SVMKTLLDRA…EEEVAIRVDQ (89 aa)) is handle region.

Belongs to the ATG3 family. As to quaternary structure, monomer. Interacts with atg8 through an intermediate thioester bond through the C-terminal Gly of atg8. Interacts with the C-terminal region of the E1-like atg7 enzyme. Also interacts with the atg12-atg5 conjugate.

The protein resides in the cytoplasm. Its function is as follows. E2 conjugating enzyme required for the cytoplasm to vacuole transport (Cvt) and autophagy. Required for selective autophagic degradation of the nucleus (nucleophagy) as well as for mitophagy which contributes to regulate mitochondrial quantity and quality by eliminating the mitochondria to a basal level to fulfill cellular energy requirements and preventing excess ROS production. Responsible for the E2-like covalent binding of phosphatidylethanolamine to the C-terminal Gly of atg8. The atg12-atg5 conjugate plays a role of an E3 and promotes the transfer of atg8 from atg3 to phosphatidylethanolamine (PE). This step is required for the membrane association of atg8. The formation of the atg8-phosphatidylethanolamine conjugate is essential for autophagy and for the cytoplasm to vacuole transport (Cvt). The atg8-PE conjugate mediates tethering between adjacent membranes and stimulates membrane hemifusion, leading to expansion of the autophagosomal membrane during autophagy. Required for normal mycelial growth and conidiogenesis, and regulates sclerotial formation. Plays an essential role in pathogenesis. The polypeptide is Autophagy-related protein 3 (Botryotinia fuckeliana (strain BcDW1) (Noble rot fungus)).